The chain runs to 212 residues: Orotate phosphoribosyltransferase (212 aa).

Lysine 26 contacts 5-phospho-alpha-D-ribose 1-diphosphate. Orotate is bound at residue 34–35 (FF). 5-phospho-alpha-D-ribose 1-diphosphate contacts are provided by residues 72–73 (YK), arginine 99, lysine 100, lysine 103, histidine 105, and 124–132 (DDVITVGTA). The orotate site is built by threonine 128 and arginine 156.

This sequence belongs to the purine/pyrimidine phosphoribosyltransferase family. PyrE subfamily. In terms of assembly, homodimer. Requires Mg(2+) as cofactor.

The catalysed reaction is orotidine 5'-phosphate + diphosphate = orotate + 5-phospho-alpha-D-ribose 1-diphosphate. The protein operates within pyrimidine metabolism; UMP biosynthesis via de novo pathway; UMP from orotate: step 1/2. In terms of biological role, catalyzes the transfer of a ribosyl phosphate group from 5-phosphoribose 1-diphosphate to orotate, leading to the formation of orotidine monophosphate (OMP). The chain is Orotate phosphoribosyltransferase from Ruthia magnifica subsp. Calyptogena magnifica.